The primary structure comprises 314 residues: MAEVQRYALVTGANKGIGFEICRQLAEKGIIVILTSRNEKRGLEARQKLLKELNVSENRLVFHQLDVTDLASVAAVAVFIKSKFGKLDILVNNAGVSGVEMVGDVSVFNEYIEADFKALQALEAGAKEEPPFKPKANGEMIEKFEGAKDCVVTNYYGPKRLTQALIPLLQLSPSPRIVNVSSSFGSLLLLWNEWAKGVLGDEDRLTEERVDEVVEVFLKDIKEGKLEESQWPPHFAAERVSKAALNAYTKIAAKKYPSFRINAICPGYAKTDITFHAGPLSVAEAAQVPVKLALLPDGGPSGCFFPRDKALALY.

10–33 is a binding site for NADP(+); the sequence is VTGANKGIGFEICRQLAEKGIIVI. S182 contacts substrate.

It belongs to the short-chain dehydrogenases/reductases (SDR) family.

It is found in the cytoplasm. It catalyses the reaction (2R,5R)-isopulegone + NADP(+) = (6R)-isopiperitenone + NADPH + H(+). The protein operates within secondary metabolite biosynthesis; terpenoid biosynthesis. Monoterpene synthase that catalyzes the specific reduction of the 1(2)-double bond of (-)-isopiperitenone to produce (+)-cis-isopulegone. Does not catalyze the reverse reaction. Unable to reduce (+)-pulegone, (+)-cis-isopulegone, (-)-menthone or the 1,2-double bond of (-)-carvone. Able to utilize NADH with 20% the efficiency of NADPH. This chain is (-)-isopiperitenone reductase, found in Mentha piperita (Peppermint).